Reading from the N-terminus, the 622-residue chain is Kinesin-like protein KIFC1 (622 aa).

Residues 1-88 are disordered; sequence MKEALEPAKK…KRPGKRPDWD (88 aa). A compositionally biased stretch (polar residues) spans 32–41; sequence SSLSQPQGPT. Positions 95–264 form a coiled coil; it reads DLTEELKCYR…QELKGNIRVF (170 aa). The Kinesin motor domain maps to 260-612; it reads NIRVFCRVRP…LRFASKVNQC (353 aa). The interval 279 to 323 is disordered; sequence PGFLLFPHGPAGPSDPPTRLSLSRSDDRRSTLTRAPAPTTRHDFS. At T309 the chain carries Phosphothreonine. 360 to 367 is an ATP binding site; it reads GQTGSGKT.

This sequence belongs to the TRAFAC class myosin-kinesin ATPase superfamily. Kinesin family. NCD subfamily. In terms of assembly, binds NUBP1 and NUBP2. Interacts with PPP1R42.

The protein resides in the nucleus. Its subcellular location is the cytoplasm. The protein localises to the cytoskeleton. It localises to the microtubule organizing center. It is found in the centrosome. The protein resides in the spindle. Its subcellular location is the early endosome. In terms of biological role, minus end-directed microtubule-dependent motor required for bipolar spindle formation. May contribute to movement of early endocytic vesicles. Regulates cilium formation and structure. The chain is Kinesin-like protein KIFC1 from Cricetulus griseus (Chinese hamster).